Consider the following 75-residue polypeptide: UPF0154 protein MMOB4450 (75 aa).

A helical transmembrane segment spans residues 7-27 (IGLIVGLSILFTIVGLVVGFF).

It belongs to the UPF0154 family.

It is found in the cell membrane. The chain is UPF0154 protein MMOB4450 from Mycoplasma mobile (strain ATCC 43663 / 163K / NCTC 11711) (Mesomycoplasma mobile).